The following is a 183-amino-acid chain: Orotate phosphoribosyltransferase (183 aa).

Residues R100, K101, K104, H106, and E126–S134 contribute to the 5-phospho-alpha-D-ribose 1-diphosphate site. Positions 130 and 158 each coordinate orotate.

The protein belongs to the purine/pyrimidine phosphoribosyltransferase family. PyrE subfamily. In terms of assembly, homodimer. The cofactor is Mg(2+).

The enzyme catalyses orotidine 5'-phosphate + diphosphate = orotate + 5-phospho-alpha-D-ribose 1-diphosphate. It participates in pyrimidine metabolism; UMP biosynthesis via de novo pathway; UMP from orotate: step 1/2. Functionally, catalyzes the transfer of a ribosyl phosphate group from 5-phosphoribose 1-diphosphate to orotate, leading to the formation of orotidine monophosphate (OMP). The chain is Orotate phosphoribosyltransferase from Aquifex aeolicus (strain VF5).